The following is a 329-amino-acid chain: DNA-directed RNA polymerase subunit alpha (329 aa).

The interval 1–231 (MQTNLLKPKT…EQLAVFAQLE (231 aa)) is alpha N-terminal domain (alpha-NTD). The interval 249-329 (FDPILLRPVD…SWPPAGLDKR (81 aa)) is alpha C-terminal domain (alpha-CTD).

Belongs to the RNA polymerase alpha chain family. In terms of assembly, homodimer. The RNAP catalytic core consists of 2 alpha, 1 beta, 1 beta' and 1 omega subunit. When a sigma factor is associated with the core the holoenzyme is formed, which can initiate transcription.

It catalyses the reaction RNA(n) + a ribonucleoside 5'-triphosphate = RNA(n+1) + diphosphate. Functionally, DNA-dependent RNA polymerase catalyzes the transcription of DNA into RNA using the four ribonucleoside triphosphates as substrates. The protein is DNA-directed RNA polymerase subunit alpha of Polaromonas sp. (strain JS666 / ATCC BAA-500).